A 503-amino-acid polypeptide reads, in one-letter code: Probable cytosol aminopeptidase (503 aa).

The Mn(2+) site is built by K268 and D273. Residue K280 is part of the active site. Mn(2+) is bound by residues D291, D350, and E352. The active site involves R354.

Belongs to the peptidase M17 family. Mn(2+) is required as a cofactor.

It localises to the cytoplasm. The catalysed reaction is Release of an N-terminal amino acid, Xaa-|-Yaa-, in which Xaa is preferably Leu, but may be other amino acids including Pro although not Arg or Lys, and Yaa may be Pro. Amino acid amides and methyl esters are also readily hydrolyzed, but rates on arylamides are exceedingly low.. It carries out the reaction Release of an N-terminal amino acid, preferentially leucine, but not glutamic or aspartic acids.. Functionally, presumably involved in the processing and regular turnover of intracellular proteins. Catalyzes the removal of unsubstituted N-terminal amino acids from various peptides. This chain is Probable cytosol aminopeptidase, found in Methylobacterium radiotolerans (strain ATCC 27329 / DSM 1819 / JCM 2831 / NBRC 15690 / NCIMB 10815 / 0-1).